Consider the following 248-residue polypeptide: Ubiquinone/menaquinone biosynthesis C-methyltransferase UbiE (248 aa).

Residues S68, D92, and 120 to 121 each bind S-adenosyl-L-methionine; that span reads NA.

The protein belongs to the class I-like SAM-binding methyltransferase superfamily. MenG/UbiE family.

The catalysed reaction is a 2-demethylmenaquinol + S-adenosyl-L-methionine = a menaquinol + S-adenosyl-L-homocysteine + H(+). It carries out the reaction a 2-methoxy-6-(all-trans-polyprenyl)benzene-1,4-diol + S-adenosyl-L-methionine = a 5-methoxy-2-methyl-3-(all-trans-polyprenyl)benzene-1,4-diol + S-adenosyl-L-homocysteine + H(+). It functions in the pathway quinol/quinone metabolism; menaquinone biosynthesis; menaquinol from 1,4-dihydroxy-2-naphthoate: step 2/2. Its pathway is cofactor biosynthesis; ubiquinone biosynthesis. Functionally, methyltransferase required for the conversion of demethylmenaquinol (DMKH2) to menaquinol (MKH2) and the conversion of 2-polyprenyl-6-methoxy-1,4-benzoquinol (DDMQH2) to 2-polyprenyl-3-methyl-6-methoxy-1,4-benzoquinol (DMQH2). The protein is Ubiquinone/menaquinone biosynthesis C-methyltransferase UbiE of Rickettsia prowazekii (strain Madrid E).